Here is a 311-residue protein sequence, read N- to C-terminus: Probable cell division protein WhiA (311 aa).

Positions 274–307 form a DNA-binding region, H-T-H motif; sequence SLKELGSLLTPPLTKSGVNHRFRKLELIAEKIRN.

This sequence belongs to the WhiA family.

Its function is as follows. Involved in cell division and chromosome segregation. This chain is Probable cell division protein WhiA, found in Carboxydothermus hydrogenoformans (strain ATCC BAA-161 / DSM 6008 / Z-2901).